We begin with the raw amino-acid sequence, 261 residues long: Ribosomal RNA small subunit methyltransferase J (261 aa).

S-adenosyl-L-methionine is bound by residues 109-110, 125-126, and D179; these read RD and ER.

The protein belongs to the methyltransferase superfamily. RsmJ family.

The protein resides in the cytoplasm. The catalysed reaction is guanosine(1516) in 16S rRNA + S-adenosyl-L-methionine = N(2)-methylguanosine(1516) in 16S rRNA + S-adenosyl-L-homocysteine + H(+). Functionally, specifically methylates the guanosine in position 1516 of 16S rRNA. This Pseudomonas aeruginosa (strain LESB58) protein is Ribosomal RNA small subunit methyltransferase J.